A 570-amino-acid polypeptide reads, in one-letter code: MFS-type transporter pigP (570 aa).

Residues 14-54 (GMIKKAHPEQTPPDVSHEGDVATEKGDSDGVEQAAPTGPTD) form a disordered region. A compositionally biased stretch (basic and acidic residues) spans 28-41 (VSHEGDVATEKGDS). A run of 7 helical transmembrane segments spans residues 65-85 (VMIM…TSII), 99-119 (LPDV…LVPL), 131-151 (WSFV…GVAT), 162-182 (VAGM…AGCV), 192-212 (GLLM…GGAF), 221-241 (CFYI…FVHI), and 263-283 (LVGF…LQYG). A glycan (N-linked (GlcNAc...) asparagine) is linked at Asn-290. Transmembrane regions (helical) follow at residues 293-313 (VVIG…LWEW), 336-356 (VVYG…PIYF), 369-389 (VYIL…GALV), 392-412 (FGYY…GNGL), 425-445 (WIGY…MPII), 455-475 (LIPV…STFL), and 533-553 (VFYL…GMGW).

The protein belongs to the major facilitator superfamily. TCR/Tet family.

Its subcellular location is the cell membrane. Functionally, MFS-type transporter; part of the gene cluster that mediates the biosynthesis of azaphilone pigments (MonAzPs), very widely used as food colorant. This is MFS-type transporter pigP from Monascus ruber (Mold).